A 264-amino-acid chain; its full sequence is tRNA pseudouridine synthase A (264 aa).

Asp51 serves as the catalytic Nucleophile. Tyr109 contributes to the substrate binding site.

Belongs to the tRNA pseudouridine synthase TruA family. As to quaternary structure, homodimer.

The catalysed reaction is uridine(38/39/40) in tRNA = pseudouridine(38/39/40) in tRNA. In terms of biological role, formation of pseudouridine at positions 38, 39 and 40 in the anticodon stem and loop of transfer RNAs. This chain is tRNA pseudouridine synthase A, found in Polaromonas naphthalenivorans (strain CJ2).